Here is a 344-residue protein sequence, read N- to C-terminus: MTTTLTLIRPDDWHLHVRDGAALAAVVPHTARQFARAIIMPNLRPPVTTAAQAVAYRERIAAAVPAGVDFTPLMTLYLTDNTPADEIVRAQAAGVVALKLYPAGATTNSDAGVTDVRKTYAALEAMQRAGMPLLVHGEVTDPAVDVFDREAVFIDQVMRPLRRDFPELKVVFEHITTQEAADYVAEADAHTAATITAHHLLYNRNAIFTGGLRPHYYCLPVLKREVHRLALVKAATSGSSKFFLGTDSAPHPAHLKEHAAACAGCYTALSAIELYAQAFDDAGALDKLEGFASLHGPDFYGLPRNSGTLTLRREPWQLPETLAFGDAQLKPLCGGETLDWRLLA.

Zn(2+) contacts are provided by His-14 and His-16. Substrate contacts are provided by residues 16-18 (HVR) and Asn-42. Lys-99, His-136, and His-174 together coordinate Zn(2+). Lys-99 carries the post-translational modification N6-carboxylysine. Substrate is bound at residue His-136. Leu-219 is a substrate binding site. Asp-247 contributes to the Zn(2+) binding site. Asp-247 is a catalytic residue. Substrate-binding residues include His-251 and Ala-263.

The protein belongs to the metallo-dependent hydrolases superfamily. DHOase family. Class II DHOase subfamily. In terms of assembly, homodimer. Requires Zn(2+) as cofactor.

The enzyme catalyses (S)-dihydroorotate + H2O = N-carbamoyl-L-aspartate + H(+). It participates in pyrimidine metabolism; UMP biosynthesis via de novo pathway; (S)-dihydroorotate from bicarbonate: step 3/3. Catalyzes the reversible cyclization of carbamoyl aspartate to dihydroorotate. The protein is Dihydroorotase of Leptothrix cholodnii (strain ATCC 51168 / LMG 8142 / SP-6) (Leptothrix discophora (strain SP-6)).